A 298-amino-acid polypeptide reads, in one-letter code: Ribosomal RNA small subunit methyltransferase A (298 aa).

Positions 35, 37, 62, 83, 108, and 133 each coordinate S-adenosyl-L-methionine.

This sequence belongs to the class I-like SAM-binding methyltransferase superfamily. rRNA adenine N(6)-methyltransferase family. RsmA subfamily.

It localises to the cytoplasm. It catalyses the reaction adenosine(1518)/adenosine(1519) in 16S rRNA + 4 S-adenosyl-L-methionine = N(6)-dimethyladenosine(1518)/N(6)-dimethyladenosine(1519) in 16S rRNA + 4 S-adenosyl-L-homocysteine + 4 H(+). Specifically dimethylates two adjacent adenosines (A1518 and A1519) in the loop of a conserved hairpin near the 3'-end of 16S rRNA in the 30S particle. May play a critical role in biogenesis of 30S subunits. The chain is Ribosomal RNA small subunit methyltransferase A from Streptococcus pyogenes serotype M12 (strain MGAS9429).